A 458-amino-acid polypeptide reads, in one-letter code: MVQISEVKGNSRDNRTAAHTHIKGLGLRPDGTAEVSGDGWVGQAAAREACGVVVDLIKAKKMAGRAVLLAGGPGTGKTALALAVSQELGTKVPFCPIVGSEIYSAEVKKTEALMENFRRAIGLRVRETKEVYEGEVTELTPQEAENPLGGYGRTISHLIIGLKSAKGTKKLRLDPSIYEAIQKERVTVGDVIYIEANTGACKRVGRSDAYATEFDLEAEEYVPVPKGEVHKKKEIVQDVTLHDLDIANARPQGGQDVMSMMGQLMKPKKTEITDKLRQEINKVVNRYIDQGVAELVPGVLFIDEVHMLDIECFTYLNRALESSISPIVILASNRGHTVIRGTDDISAAHGIPPDLLARLLIIPTHPYSPDEIKTIIRLRAKTEGLNITDPALDKVAEHGSKVSLRYALQLLTPASILARVNGRPGGIEEADVTECEDLFLDSKRSAAIVNQDSEKFLY.

The interval 1 to 29 is disordered; it reads MVQISEVKGNSRDNRTAAHTHIKGLGLRP. 71 to 78 serves as a coordination point for ATP; it reads GGPGTGKT.

This sequence belongs to the RuvB family. May form heterododecamers with RVB2. Component of the SWR1 chromatin remodeling complex, the INO80 chromatin remodeling complex, and of the R2TP complex.

It localises to the nucleus. It carries out the reaction ATP + H2O = ADP + phosphate + H(+). DNA helicase which participates in several chromatin remodeling complexes, including the SWR1 and the INO80 complexes. The SWR1 complex mediates the ATP-dependent exchange of histone H2A for the H2A variant HZT1 leading to transcriptional regulation of selected genes by chromatin remodeling. The INO80 complex remodels chromatin by shifting nucleosomes and is involved in DNA repair. Also involved in pre-rRNA processing. The polypeptide is RuvB-like helicase 1 (rvb1) (Emericella nidulans (strain FGSC A4 / ATCC 38163 / CBS 112.46 / NRRL 194 / M139) (Aspergillus nidulans)).